A 211-amino-acid chain; its full sequence is Protein-methionine-sulfoxide reductase heme-binding subunit MsrQ (211 aa).

4 helical membrane passes run 10–30, 82–102, 116–136, and 153–173; these read WLKV…VWAI, LWCF…ELGV, PYLT…FTST, and FVYL…KIIS.

Belongs to the MsrQ family. In terms of assembly, heterodimer of a catalytic subunit (MsrP) and a heme-binding subunit (MsrQ). FMN serves as cofactor. The cofactor is heme b.

The protein resides in the cell inner membrane. In terms of biological role, part of the MsrPQ system that repairs oxidized periplasmic proteins containing methionine sulfoxide residues (Met-O), using respiratory chain electrons. Thus protects these proteins from oxidative-stress damage caused by reactive species of oxygen and chlorine generated by the host defense mechanisms. MsrPQ is essential for the maintenance of envelope integrity under bleach stress, rescuing a wide series of structurally unrelated periplasmic proteins from methionine oxidation, including the primary periplasmic chaperone SurA and the lipoprotein Pal. MsrQ provides electrons for reduction to the reductase catalytic subunit MsrP, using the quinone pool of the respiratory chain. This Escherichia coli O157:H7 protein is Protein-methionine-sulfoxide reductase heme-binding subunit MsrQ.